The sequence spans 264 residues: Small ribosomal subunit protein uS2 (264 aa).

The segment covering 243–253 (IEAAEDGEEVD) has biased composition (acidic residues). The segment at 243-264 (IEAAEDGEEVDNAQLTSSQGRS) is disordered. Positions 255–264 (AQLTSSQGRS) are enriched in polar residues.

It belongs to the universal ribosomal protein uS2 family.

This is Small ribosomal subunit protein uS2 from Deinococcus geothermalis (strain DSM 11300 / CIP 105573 / AG-3a).